The following is a 67-amino-acid chain: DNA-directed RNA polymerase subunit omega (67 aa).

Belongs to the RNA polymerase subunit omega family. As to quaternary structure, the RNAP catalytic core consists of 2 alpha, 1 beta, 1 beta' and 1 omega subunit. When a sigma factor is associated with the core the holoenzyme is formed, which can initiate transcription.

The enzyme catalyses RNA(n) + a ribonucleoside 5'-triphosphate = RNA(n+1) + diphosphate. Promotes RNA polymerase assembly. Latches the N- and C-terminal regions of the beta' subunit thereby facilitating its interaction with the beta and alpha subunits. The protein is DNA-directed RNA polymerase subunit omega of Acidovorax ebreus (strain TPSY) (Diaphorobacter sp. (strain TPSY)).